We begin with the raw amino-acid sequence, 209 residues long: Claudin-4 (209 aa).

Over 1–9 the chain is Cytoplasmic; it reads MASMGLQVM. The interval 1–103 is interaction with EPHA2; it reads MASMGLQVMG…GVLLSVVGGK (103 aa). The helical transmembrane segment at 10–30 threads the bilayer; the sequence is GIALAVLGWLGAILSCALPMW. Over 31 to 81 the chain is Extracellular; that stretch reads RVTAFIGSNIVTSQTIWEGLWMNCVVQSTGQMQCKVYDSLLALPQDLQAAR. A disulfide bridge links Cys54 with Cys64. Residues 82-102 traverse the membrane as a helical segment; it reads ALIVICIILAVFGVLLSVVGG. Residues 103 to 117 lie on the Cytoplasmic side of the membrane; that stretch reads KCTNCVDDESSKAKI. A helical membrane pass occupies residues 118-138; the sequence is MIVAGVVFLLAGLLVMVPVSW. Over 139-160 the chain is Extracellular; the sequence is TANNVIRDFYNPLVASGQKREM. A helical transmembrane segment spans residues 161 to 181; the sequence is GASLYVGWAAAGLLILGGALL. At 182–209 the chain is on the cytoplasmic side; it reads CFNCPPRNDKPYSAKYSAARSAPASNYV. Tyr208 is subject to Phosphotyrosine; by EPHA2. The tract at residues 208–209 is interactions with TJP1, TJP2 and TJP3; the sequence is YV.

Belongs to the claudin family. Interacts with EPHA2; phosphorylates CLDN4 and may regulate tight junctions. Directly interacts with TJP1/ZO-1, TJP2/ZO-2 and TJP3/ZO-3. Interacts with CLDN1. Interacts with CLDN8. In terms of processing, phosphorylated. Phosphorylation by EPHA2 is stimulated by EFNA1 and alters interaction with TJP1.

Its subcellular location is the cell junction. The protein localises to the tight junction. The protein resides in the cell membrane. Its function is as follows. Channel-forming tight junction protein that mediates paracellular chloride transport in the kidney. Plays a critical role in the paracellular reabsorption of filtered chloride in the kidney collecting ducts. Claudins play a major role in tight junction-specific obliteration of the intercellular space, through calcium-independent cell-adhesion activity. The sequence is that of Claudin-4 (CLDN4) from Bos taurus (Bovine).